Here is a 250-residue protein sequence, read N- to C-terminus: Small ribosomal subunit protein uS2 (250 aa).

It belongs to the universal ribosomal protein uS2 family.

This is Small ribosomal subunit protein uS2 from Polaromonas naphthalenivorans (strain CJ2).